The following is a 161-amino-acid chain: SsrA-binding protein (161 aa).

Belongs to the SmpB family.

It is found in the cytoplasm. Its function is as follows. Required for rescue of stalled ribosomes mediated by trans-translation. Binds to transfer-messenger RNA (tmRNA), required for stable association of tmRNA with ribosomes. tmRNA and SmpB together mimic tRNA shape, replacing the anticodon stem-loop with SmpB. tmRNA is encoded by the ssrA gene; the 2 termini fold to resemble tRNA(Ala) and it encodes a 'tag peptide', a short internal open reading frame. During trans-translation Ala-aminoacylated tmRNA acts like a tRNA, entering the A-site of stalled ribosomes, displacing the stalled mRNA. The ribosome then switches to translate the ORF on the tmRNA; the nascent peptide is terminated with the 'tag peptide' encoded by the tmRNA and targeted for degradation. The ribosome is freed to recommence translation, which seems to be the essential function of trans-translation. The polypeptide is SsrA-binding protein (Vibrio campbellii (strain ATCC BAA-1116)).